The following is a 340-amino-acid chain: Uroporphyrinogen decarboxylase (340 aa).

Substrate-binding positions include 21-25, D71, Y147, S202, and H315; that span reads RQAGR.

This sequence belongs to the uroporphyrinogen decarboxylase family. Homodimer.

Its subcellular location is the cytoplasm. It catalyses the reaction uroporphyrinogen III + 4 H(+) = coproporphyrinogen III + 4 CO2. It functions in the pathway porphyrin-containing compound metabolism; protoporphyrin-IX biosynthesis; coproporphyrinogen-III from 5-aminolevulinate: step 4/4. In terms of biological role, catalyzes the decarboxylation of four acetate groups of uroporphyrinogen-III to yield coproporphyrinogen-III. The chain is Uroporphyrinogen decarboxylase from Nautilia profundicola (strain ATCC BAA-1463 / DSM 18972 / AmH).